We begin with the raw amino-acid sequence, 689 residues long: DNA ligase (689 aa).

NAD(+) is bound by residues 40-44 (DSEYD), 89-90 (SL), and Glu121. Catalysis depends on Lys123, which acts as the N6-AMP-lysine intermediate. Residues Arg144, Glu179, Lys295, and Lys319 each contribute to the NAD(+) site. 4 residues coordinate Zn(2+): Cys413, Cys416, Cys431, and Cys437. Residues 610-689 (REQNILTGKI…VEWLAFIKNA (80 aa)) form the BRCT domain.

It belongs to the NAD-dependent DNA ligase family. LigA subfamily. It depends on Mg(2+) as a cofactor. Mn(2+) is required as a cofactor.

It catalyses the reaction NAD(+) + (deoxyribonucleotide)n-3'-hydroxyl + 5'-phospho-(deoxyribonucleotide)m = (deoxyribonucleotide)n+m + AMP + beta-nicotinamide D-nucleotide.. Functionally, DNA ligase that catalyzes the formation of phosphodiester linkages between 5'-phosphoryl and 3'-hydroxyl groups in double-stranded DNA using NAD as a coenzyme and as the energy source for the reaction. It is essential for DNA replication and repair of damaged DNA. The polypeptide is DNA ligase (Rickettsia prowazekii (strain Madrid E)).